A 418-amino-acid polypeptide reads, in one-letter code: METKRLTQRSMVFVLAGGRGSRLKELTDRRVKPAVPFGGKARIIDFALSNALNSGIRKMAIATQYKAHSLIRHLQRGWTFFRAERNEFLDILPASQRTGTEAWYAGTADAVTQNIDIVDSYDVDYVIILAGDHIYKMDYEVMLREHVETGADVTVGCLTVPRMEATAFGVMATDETGKITSFLEKPADPPAMPDDPNSALASMGIYVFKWSFLRELLVADALDTNSSHDFGHDLIPEIVENGKAMAHRYDRSCVRADGAPVYWKDVGTVDAFWEAHIDLTNFTPDLDLWDKNWPIWTYSESVPPAKFIHDERDRRGMAISSMVAGGCIISGTEVRNSCLFTGVHTNSYAVLDHAVVLPNVVVNRHARLRKVVVDSDVVVPEGLVVGEDPTEDAKWFRVSERGVTLITQDMLDKRAQAQ.

Residues Tyr104, Gly169, 184 to 185, and Ser202 contribute to the alpha-D-glucose 1-phosphate site; that span reads EK.

This sequence belongs to the bacterial/plant glucose-1-phosphate adenylyltransferase family. In terms of assembly, homotetramer.

It catalyses the reaction alpha-D-glucose 1-phosphate + ATP + H(+) = ADP-alpha-D-glucose + diphosphate. The protein operates within glycan biosynthesis; glycogen biosynthesis. Involved in the biosynthesis of ADP-glucose, a building block required for the elongation reactions to produce glycogen. Catalyzes the reaction between ATP and alpha-D-glucose 1-phosphate (G1P) to produce pyrophosphate and ADP-Glc. In Jannaschia sp. (strain CCS1), this protein is Glucose-1-phosphate adenylyltransferase.